The following is a 163-amino-acid chain: Nucleotide-binding protein tll0793 (163 aa).

This sequence belongs to the YajQ family.

Nucleotide-binding protein. The protein is Nucleotide-binding protein tll0793 of Thermosynechococcus vestitus (strain NIES-2133 / IAM M-273 / BP-1).